The chain runs to 876 residues: Alanine--tRNA ligase (876 aa).

Residues H565, H569, C667, and H671 each coordinate Zn(2+).

Belongs to the class-II aminoacyl-tRNA synthetase family. Zn(2+) is required as a cofactor.

It is found in the cytoplasm. It catalyses the reaction tRNA(Ala) + L-alanine + ATP = L-alanyl-tRNA(Ala) + AMP + diphosphate. In terms of biological role, catalyzes the attachment of alanine to tRNA(Ala) in a two-step reaction: alanine is first activated by ATP to form Ala-AMP and then transferred to the acceptor end of tRNA(Ala). Also edits incorrectly charged Ser-tRNA(Ala) and Gly-tRNA(Ala) via its editing domain. In Staphylococcus epidermidis (strain ATCC 35984 / DSM 28319 / BCRC 17069 / CCUG 31568 / BM 3577 / RP62A), this protein is Alanine--tRNA ligase.